The primary structure comprises 340 residues: MTQVNNWNELVSVLEGKTDVLFVELLIKVNRHINSNRFNKNFNPTTVIKSQQSIFDTFKLIFEQLSIETDTNEIFTEITSLTTNNTMTFLMTGVGKWIKFHGKETSNIHFIDDEKTIISDRTLADFLNKITEFQNQYTYFGKKPLVYYKFKDLPSGEILEYIKTFDVIPCVLTDVTPSLNYDKDNFESTLLLDQASVLTLCSNLSWGYSDTFYQLSQENKTKEQVIANKLEMDNLILGKRLLVNKSVYDGIVAKIDFTAGPTEKNRFENISKYLEIVEDCINPRFLKMKDSELICTSVAERECATIVTNNKHVWKKIKLFYKEIPCKLFVSVQLTETKYN.

This is an uncharacterized protein from Acanthamoeba polyphaga mimivirus (APMV).